The primary structure comprises 123 residues: ATP synthase epsilon chain (123 aa).

This sequence belongs to the ATPase epsilon chain family. In terms of assembly, F-type ATPases have 2 components, CF(1) - the catalytic core - and CF(0) - the membrane proton channel. CF(1) has five subunits: alpha(3), beta(3), gamma(1), delta(1), epsilon(1). CF(0) has three main subunits: a, b and c.

It localises to the cell inner membrane. Its function is as follows. Produces ATP from ADP in the presence of a proton gradient across the membrane. The polypeptide is ATP synthase epsilon chain (Helicobacter pylori (strain G27)).